We begin with the raw amino-acid sequence, 1226 residues long: Methionine synthase (1226 aa).

The 321-residue stretch at 6–326 folds into the Hcy-binding domain; sequence RQQLEQQLKQ…EHIAAIAKAV (321 aa). Positions 248, 311, and 312 each coordinate Zn(2+). The region spanning 357 to 618 is the Pterin-binding domain; sequence FVNVGERTNV…VPLKLREAVE (262 aa). The B12-binding N-terminal domain maps to 651 to 745; it reads SALEWRAWPV…FINAQKSGST (95 aa). Residues Glu-695, 757-761, His-760, Ser-805, Thr-809, and Ala-861 contribute to the methylcob(III)alamin site; that span reads GDVHD. The B12-binding domain maps to 747–882; sequence NGKILLATVK…SDEQRPGFIE (136 aa). The AdoMet activation domain maps to 898–1226; the sequence is KTPKSRPVTL…EKWLAPNLDA (329 aa). S-adenosyl-L-methionine is bound by residues Asp-948, Arg-1136, and 1191–1192; that span reads YF.

The protein belongs to the vitamin-B12 dependent methionine synthase family. It depends on methylcob(III)alamin as a cofactor. Zn(2+) serves as cofactor.

It catalyses the reaction (6S)-5-methyl-5,6,7,8-tetrahydrofolate + L-homocysteine = (6S)-5,6,7,8-tetrahydrofolate + L-methionine. The protein operates within amino-acid biosynthesis; L-methionine biosynthesis via de novo pathway; L-methionine from L-homocysteine (MetH route): step 1/1. In terms of biological role, catalyzes the transfer of a methyl group from methyl-cobalamin to homocysteine, yielding enzyme-bound cob(I)alamin and methionine. Subsequently, remethylates the cofactor using methyltetrahydrofolate. This Vibrio cholerae serotype O1 (strain ATCC 39315 / El Tor Inaba N16961) protein is Methionine synthase (metH).